A 380-amino-acid chain; its full sequence is Hydrogenase maturation factor HypD1 (380 aa).

Fe cation contacts are provided by Cys-36, Cys-64, and Cys-67.

The protein belongs to the HypD family. It depends on [4Fe-4S] cluster as a cofactor.

It functions in the pathway protein modification; [NiFe] hydrogenase maturation. Functionally, involved in the maturation of [NiFe] hydrogenases. Involved in the biosynthesis of the Fe(CN)(2)CO cofactor. In Bradyrhizobium diazoefficiens (strain JCM 10833 / BCRC 13528 / IAM 13628 / NBRC 14792 / USDA 110), this protein is Hydrogenase maturation factor HypD1 (hypD1).